The chain runs to 384 residues: Alpha-2B adrenergic receptor (384 aa).

The chain crosses the membrane as a helical span at residues 1-25; that stretch reads AIAAVTTFLILFTVFGNALVILAVL. At 26 to 36 the chain is on the cytoplasmic side; the sequence is TSRSLRAPQNL. Residues 37 to 62 form a helical membrane-spanning segment; the sequence is FLVSLAAADILVATLIXPFSLANELL. Topologically, residues 63-72 are extracellular; sequence GYWYFWHTWC. Residues Cys72 and Cys151 are joined by a disulfide bond. Residues 73–95 traverse the membrane as a helical segment; sequence EVYLALXVLXCTSSIVHLCAISL. The Cytoplasmic portion of the chain corresponds to 96–117; the sequence is DRYWAVSRALEYNSKRTPRRIX. The helical transmembrane segment at 118-140 threads the bilayer; that stretch reads GIILTVWLIAAAISLPPLIYKGD. Residues 141-156 are Extracellular-facing; that stretch reads QGPQPHGRPQCRLNQE. The chain crosses the membrane as a helical span at residues 157–180; the sequence is AWYILSSSIGSFFAPCLIMILVYL. Residues 181–348 lie on the Cytoplasmic side of the membrane; the sequence is RIYLIAKRRN…LTREKRFTFV (168 aa). Positions 193–306 are disordered; the sequence is GPRAQGASKG…SXGSPQLQQP (114 aa). Positions 288-306 are enriched in low complexity; the sequence is PEALPASPASXGSPQLQQP. Residues 349 to 372 traverse the membrane as a helical segment; that stretch reads LAVVIGVXVLCWFPFFXSYSLGAI. The Extracellular portion of the chain corresponds to 373-381; the sequence is CPQHCTVXH. A helical membrane pass occupies residues 382–384; the sequence is GLF.

This sequence belongs to the G-protein coupled receptor 1 family. Adrenergic receptor subfamily. ADRA2B sub-subfamily. Interacts with RAB26. Interacts with PPP1R9B. Interacts with GGA1, GGA2 and GGA3.

It localises to the cell membrane. In terms of biological role, alpha-2 adrenergic receptors mediate the catecholamine-induced inhibition of adenylate cyclase through the action of G proteins. This is Alpha-2B adrenergic receptor (ADRA2B) from Echinops telfairi (Lesser hedgehog tenrec).